The primary structure comprises 184 residues: Ribosome-recycling factor (184 aa).

It belongs to the RRF family.

The protein localises to the cytoplasm. Its function is as follows. Responsible for the release of ribosomes from messenger RNA at the termination of protein biosynthesis. May increase the efficiency of translation by recycling ribosomes from one round of translation to another. This chain is Ribosome-recycling factor, found in Bifidobacterium animalis subsp. lactis (strain AD011).